Consider the following 156-residue polypeptide: Putative NrdI-like protein (156 aa).

This is Putative NrdI-like protein from Streptococcus pneumoniae (strain ATCC BAA-255 / R6).